The following is a 244-amino-acid chain: Ribonuclease PH (244 aa).

Phosphate is bound by residues Arg90 and 128–130 (GTR).

Belongs to the RNase PH family. In terms of assembly, homohexameric ring arranged as a trimer of dimers.

The catalysed reaction is tRNA(n+1) + phosphate = tRNA(n) + a ribonucleoside 5'-diphosphate. Its function is as follows. Phosphorolytic 3'-5' exoribonuclease that plays an important role in tRNA 3'-end maturation. Removes nucleotide residues following the 3'-CCA terminus of tRNAs; can also add nucleotides to the ends of RNA molecules by using nucleoside diphosphates as substrates, but this may not be physiologically important. Probably plays a role in initiation of 16S rRNA degradation (leading to ribosome degradation) during starvation. This chain is Ribonuclease PH, found in Cutibacterium acnes (strain DSM 16379 / KPA171202) (Propionibacterium acnes).